The chain runs to 324 residues: Tetrahydromethanopterin:alpha-L-glutamate ligase (324 aa).

The ATP-grasp domain maps to Ser-113–Gln-321. ATP-binding positions include Lys-148, Gln-195–Asp-204, and Arg-220. Asp-265 is a Mg(2+) binding site. Asp-265 lines the Mn(2+) pocket. The segment at Thr-274–Leu-293 is disordered. Glu-294 and Asn-296 together coordinate Mg(2+). Mn(2+) is bound by residues Glu-294 and Asn-296.

The protein belongs to the RimK family. MptN subfamily. In terms of assembly, homodimer. Requires Mg(2+) as cofactor. The cofactor is Mn(2+).

It catalyses the reaction 5,6,7,8-tetrahydromethanopterin + L-glutamate + ATP = 5,6,7,8-tetrahydrosarcinapterin + ADP + phosphate + H(+). It participates in cofactor biosynthesis; 5,6,7,8-tetrahydrosarcinapterin biosynthesis. Functionally, catalyzes the ATP or GTP-dependent addition of one L-glutamate molecule to tetrahydromethanopterin, producing tetrahydrosarcinapterin. The chain is Tetrahydromethanopterin:alpha-L-glutamate ligase (mptN) from Methanosarcina acetivorans (strain ATCC 35395 / DSM 2834 / JCM 12185 / C2A).